Reading from the N-terminus, the 496-residue chain is RNA-binding motif protein, Y chromosome, family 1 member A1 (496 aa).

The RRM domain occupies Gly-8–Lys-85. Disordered stretches follow at residues Ile-78–Tyr-349 and Lys-452–Tyr-496. 2 stretches are compositionally biased toward low complexity: residues Pro-97–Gly-114 and Pro-149–Gly-159. Positions Asn-175–Met-184 are enriched in polar residues. Composition is skewed to basic and acidic residues over residues Arg-204–Gly-214, Asp-242–Ser-253, Ala-276–Tyr-289, Gly-313–Tyr-326, Ser-335–Tyr-349, and Gly-484–Tyr-496.

Interacts with splicing factor proteins SFRS3/SRP20, TRA2B/SFRS10, KHDRBS1/SAM68 and KHDRBS3. As to expression, testis-specific.

The protein localises to the nucleus. Functionally, RNA-binding protein involved in pre-mRNA splicing. Required for sperm development. Acts additively with TRA2B to promote exon 7 inclusion of the survival motor neuron SMN. Binds non-specifically to mRNAs. This Homo sapiens (Human) protein is RNA-binding motif protein, Y chromosome, family 1 member A1 (RBMY1A1).